The chain runs to 411 residues: Receptor GIN3 (411 aa).

Residues 1 to 99 (MSGFVAGEEA…LLPILPHPRN (99 aa)) are Extracellular-facing. A helical transmembrane segment spans residues 100-120 (IPIIVPLFCVFTVMTSLAVGL). Residues 121-134 (RLWSRQKVAGGIRS) are Cytoplasmic-facing. The helical transmembrane segment at 135 to 155 (FDWLALAGFGLTIIYGAVSVY) threads the bilayer. Topologically, residues 156 to 181 (HSKVSGPYQAFYDRTWDQMKENYKVY) are extracellular. Residues 182–202 (LVLTIMYPFIMGLIKISLLLF) traverse the membrane as a helical segment. At 203-227 (YYRVATLNYVQWAVYATGSLTIANS) the chain is on the cytoplasmic side. A helical transmembrane segment spans residues 228 to 248 (IAAIITHCLAFMPIDFWNHFL). The Extracellular segment spans residues 249–262 (QSPFKFNSRTPMLV). Residues 263-283 (FGAVYILTDVAILIIPMPMVF) form a helical membrane-spanning segment. Over 284–292 (QLKLYPREK) the chain is Cytoplasmic. A helical membrane pass occupies residues 293–313 (VIAVIAFSLGGVACVASGFRI). The Extracellular segment spans residues 314-328 (WAIDEFQNYSGKNSS). N-linked (GlcNAc...) asparagine glycosylation is found at asparagine 321 and asparagine 326. Residues 329–349 (GLMIDAWTMIELNLTLICASA) traverse the membrane as a helical segment. At 350–411 (PAIRALAIHY…QSPVIPKEVV (62 aa)) the chain is on the cytoplasmic side. A disordered region spans residues 371-411 (FSSSGATRGSKSAGSSGKSKTPESEKSMQVSQSPVIPKEVV). The segment covering 372–389 (SSSGATRGSKSAGSSGKS) has biased composition (low complexity).

This sequence belongs to the SAT4 family. As to quaternary structure, interacts with guanine nucleotide-binding protein alpha GPA2; to activate adenylate cyclase and positively regulate nematode trap formation.

The protein resides in the cell membrane. Its function is as follows. Receptor that senses nematode-derived signals at the cell surface and signals via adenylate cyclase to positively regulate trap formation for nematode capture. The protein is Receptor GIN3 of Arthrobotrys oligospora (strain ATCC 24927 / CBS 115.81 / DSM 1491) (Nematode-trapping fungus).